The sequence spans 113 residues: Small ribosomal subunit protein bS6 (113 aa).

The protein belongs to the bacterial ribosomal protein bS6 family.

Functionally, binds together with bS18 to 16S ribosomal RNA. This Vesicomyosocius okutanii subsp. Calyptogena okutanii (strain HA) protein is Small ribosomal subunit protein bS6.